The following is a 470-amino-acid chain: ATP synthase subunit beta (470 aa).

Residue 157–164 (GGAGVGKT) coordinates ATP.

The protein belongs to the ATPase alpha/beta chains family. F-type ATPases have 2 components, CF(1) - the catalytic core - and CF(0) - the membrane proton channel. CF(1) has five subunits: alpha(3), beta(3), gamma(1), delta(1), epsilon(1). CF(0) has three main subunits: a(1), b(2) and c(9-12). The alpha and beta chains form an alternating ring which encloses part of the gamma chain. CF(1) is attached to CF(0) by a central stalk formed by the gamma and epsilon chains, while a peripheral stalk is formed by the delta and b chains.

It is found in the cell inner membrane. It catalyses the reaction ATP + H2O + 4 H(+)(in) = ADP + phosphate + 5 H(+)(out). In terms of biological role, produces ATP from ADP in the presence of a proton gradient across the membrane. The catalytic sites are hosted primarily by the beta subunits. The chain is ATP synthase subunit beta from Geotalea uraniireducens (strain Rf4) (Geobacter uraniireducens).